A 653-amino-acid polypeptide reads, in one-letter code: Acetyl-coenzyme A synthetase 1 (653 aa).

CoA contacts are provided by residues 191–194, threonine 311, and asparagine 335; that span reads RGGR. ATP-binding positions include 387–389, 411–416, aspartate 500, and arginine 515; these read GEP and DTWWQT. Residue serine 523 coordinates CoA. ATP is bound at residue arginine 526. Residues valine 537, histidine 539, and valine 542 each contribute to the Mg(2+) site. A CoA-binding site is contributed by arginine 584. Lysine 609 is subject to N6-acetyllysine.

It belongs to the ATP-dependent AMP-binding enzyme family. It depends on Mg(2+) as a cofactor. In terms of processing, acetylated. Deacetylation by the SIR2-homolog deacetylase activates the enzyme.

The catalysed reaction is acetate + ATP + CoA = acetyl-CoA + AMP + diphosphate. Functionally, catalyzes the conversion of acetate into acetyl-CoA (AcCoA), an essential intermediate at the junction of anabolic and catabolic pathways. AcsA undergoes a two-step reaction. In the first half reaction, AcsA combines acetate with ATP to form acetyl-adenylate (AcAMP) intermediate. In the second half reaction, it can then transfer the acetyl group from AcAMP to the sulfhydryl group of CoA, forming the product AcCoA. This chain is Acetyl-coenzyme A synthetase 1, found in Pseudomonas putida (strain ATCC 47054 / DSM 6125 / CFBP 8728 / NCIMB 11950 / KT2440).